The primary structure comprises 138 residues: Cystatin-11 (138 aa).

An N-terminal signal peptide occupies residues 1-26; that stretch reads MMAEPWQALQLLLAILLTLMALPYQA. 2 disulfide bridges follow: cysteine 94-cysteine 102 and cysteine 115-cysteine 135. An N-linked (GlcNAc...) asparagine glycan is attached at asparagine 132.

This sequence belongs to the cystatin family. As to expression, detected in the epithelium and lumen of the epididymis, and in sperm (at protein level).

It is found in the secreted. Functionally, has antibacterial activity against the Gram-negative bacteria E.coli. May play a role in sperm maturation and fertilization. The chain is Cystatin-11 (CST11) from Homo sapiens (Human).